Here is a 580-residue protein sequence, read N- to C-terminus: Conglutin beta 3 (580 aa).

The signal sequence occupies residues Met-1–Gly-30. Basic and acidic residues-rich tracts occupy residues Asn-37–Glu-72 and Arg-79–Glu-92. A disordered region spans residues Asn-37–Tyr-165. The span at Gln-124–Gln-133 shows a compositional bias: low complexity. Over residues Ser-134–Arg-145 the composition is skewed to basic and acidic residues. Cupin type-1 domains lie at Tyr-164–Gln-322 and Phe-381–Glu-538. 2 N-linked (GlcNAc...) asparagine glycosylation sites follow: Asn-229 and Asn-488. The segment at Phe-549–Arg-569 is disordered.

It belongs to the 7S seed storage protein family. Component of globulins complexes which accumulate in seeds.

Functionally, seed storage protein. Accumulates during seed development and is hydrolyzed after germination to provide a carbon and nitrogen source for the developing seedling. This Lupinus angustifolius (Narrow-leaved blue lupine) protein is Conglutin beta 3.